The sequence spans 395 residues: Chaperone protein DnaJ 1 (395 aa).

The region spanning 10–75 (DFYQELGVSS…AKRKEYDETR (66 aa)) is the J domain. A CR-type zinc finger spans residues 164–242 (GVAMPLRLTS…CKGTGVTTRT (79 aa)). Zn(2+) contacts are provided by C177, C180, C194, C197, C216, C219, C230, and C233. CXXCXGXG motif repeat units lie at residues 177 to 184 (CTNCHGSG), 194 to 201 (CPTCNGSG), 216 to 223 (CTDCRGSG), and 230 to 237 (CEECKGTG).

This sequence belongs to the DnaJ family. Homodimer. Zn(2+) is required as a cofactor.

It is found in the cytoplasm. Participates actively in the response to hyperosmotic and heat shock by preventing the aggregation of stress-denatured proteins and by disaggregating proteins, also in an autonomous, DnaK-independent fashion. Unfolded proteins bind initially to DnaJ; upon interaction with the DnaJ-bound protein, DnaK hydrolyzes its bound ATP, resulting in the formation of a stable complex. GrpE releases ADP from DnaK; ATP binding to DnaK triggers the release of the substrate protein, thus completing the reaction cycle. Several rounds of ATP-dependent interactions between DnaJ, DnaK and GrpE are required for fully efficient folding. Also involved, together with DnaK and GrpE, in the DNA replication of plasmids through activation of initiation proteins. The sequence is that of Chaperone protein DnaJ 1 from Mycobacterium bovis (strain ATCC BAA-935 / AF2122/97).